The primary structure comprises 644 residues: 3D-(3,5/4)-trihydroxycyclohexane-1,2-dione hydrolase 2 (644 aa).

E65 contacts thiamine diphosphate. Positions 442 to 522 (SLPGDLQRMW…INVLLFDNSG (81 aa)) are thiamine pyrophosphate binding. Residues D493 and N520 each coordinate Mg(2+).

This sequence belongs to the TPP enzyme family. Mg(2+) serves as cofactor. Thiamine diphosphate is required as a cofactor.

It carries out the reaction 3D-3,5/4-trihydroxycyclohexane-1,2-dione + H2O = 5-deoxy-D-glucuronate + H(+). Its pathway is polyol metabolism; myo-inositol degradation into acetyl-CoA; acetyl-CoA from myo-inositol: step 3/7. Its function is as follows. Involved in the cleavage of the C1-C2 bond of 3D-(3,5/4)-trihydroxycyclohexane-1,2-dione (THcHDO) to yield 5-deoxy-glucuronate (5DG). This Bacillus cereus (strain ZK / E33L) protein is 3D-(3,5/4)-trihydroxycyclohexane-1,2-dione hydrolase 2.